A 394-amino-acid polypeptide reads, in one-letter code: Dual-specificity RNA methyltransferase RlmN (394 aa).

Residue glutamate 116 is the Proton acceptor of the active site. In terms of domain architecture, Radical SAM core spans 122–365 (EEDRGTLCVS…SPIRTPRGED (244 aa)). A disulfide bridge connects residues cysteine 129 and cysteine 370. Positions 136, 140, and 143 each coordinate [4Fe-4S] cluster. S-adenosyl-L-methionine-binding positions include 196–197 (GE), serine 228, 250–252 (SFH), and asparagine 327. Cysteine 370 (S-methylcysteine intermediate) is an active-site residue.

It belongs to the radical SAM superfamily. RlmN family. [4Fe-4S] cluster is required as a cofactor.

The protein localises to the cytoplasm. It carries out the reaction adenosine(2503) in 23S rRNA + 2 reduced [2Fe-2S]-[ferredoxin] + 2 S-adenosyl-L-methionine = 2-methyladenosine(2503) in 23S rRNA + 5'-deoxyadenosine + L-methionine + 2 oxidized [2Fe-2S]-[ferredoxin] + S-adenosyl-L-homocysteine. The enzyme catalyses adenosine(37) in tRNA + 2 reduced [2Fe-2S]-[ferredoxin] + 2 S-adenosyl-L-methionine = 2-methyladenosine(37) in tRNA + 5'-deoxyadenosine + L-methionine + 2 oxidized [2Fe-2S]-[ferredoxin] + S-adenosyl-L-homocysteine. Functionally, specifically methylates position 2 of adenine 2503 in 23S rRNA and position 2 of adenine 37 in tRNAs. m2A2503 modification seems to play a crucial role in the proofreading step occurring at the peptidyl transferase center and thus would serve to optimize ribosomal fidelity. This Dinoroseobacter shibae (strain DSM 16493 / NCIMB 14021 / DFL 12) protein is Dual-specificity RNA methyltransferase RlmN.